The primary structure comprises 360 residues: Fe(3+) ions import ATP-binding protein FbpC (360 aa).

Residues 4 to 236 (LEIKGLHKHY…PKDRMIAEFL (233 aa)) form the ABC transporter domain. 36 to 43 (GPSGCGKT) provides a ligand contact to ATP.

Belongs to the ABC transporter superfamily. Fe(3+) ion importer (TC 3.A.1.10) family. In terms of assembly, the complex is composed of two ATP-binding proteins (FbpC), two transmembrane proteins (FbpB) and a solute-binding protein (FbpA).

Its subcellular location is the cell inner membrane. It carries out the reaction Fe(3+)(out) + ATP + H2O = Fe(3+)(in) + ADP + phosphate + H(+). Its function is as follows. Part of the ABC transporter complex FbpABC involved in Fe(3+) ions import. Responsible for energy coupling to the transport system. This chain is Fe(3+) ions import ATP-binding protein FbpC, found in Mesorhizobium japonicum (strain LMG 29417 / CECT 9101 / MAFF 303099) (Mesorhizobium loti (strain MAFF 303099)).